Here is a 145-residue protein sequence, read N- to C-terminus: D-aminoacyl-tRNA deacylase (145 aa).

The Gly-cisPro motif, important for rejection of L-amino acids signature appears at 137–138 (GP).

It belongs to the DTD family. In terms of assembly, homodimer.

Its subcellular location is the cytoplasm. The enzyme catalyses glycyl-tRNA(Ala) + H2O = tRNA(Ala) + glycine + H(+). It carries out the reaction a D-aminoacyl-tRNA + H2O = a tRNA + a D-alpha-amino acid + H(+). Its function is as follows. An aminoacyl-tRNA editing enzyme that deacylates mischarged D-aminoacyl-tRNAs. Also deacylates mischarged glycyl-tRNA(Ala), protecting cells against glycine mischarging by AlaRS. Acts via tRNA-based rather than protein-based catalysis; rejects L-amino acids rather than detecting D-amino acids in the active site. By recycling D-aminoacyl-tRNA to D-amino acids and free tRNA molecules, this enzyme counteracts the toxicity associated with the formation of D-aminoacyl-tRNA entities in vivo and helps enforce protein L-homochirality. The polypeptide is D-aminoacyl-tRNA deacylase (Pseudomonas fluorescens (strain SBW25)).